The chain runs to 345 residues: Tyrosine-binding protein (345 aa).

Residues Met-1–Gly-23 form the signal peptide. A lipid anchor (N-palmitoyl cysteine) is attached at Cys-24. Cys-24 carries the S-diacylglycerol cysteine lipid modification.

The complex is probably composed of two ATP-binding proteins (CDR20291_0806), two transmembrane proteins (CDR20291_0807) and a solute-binding protein (CDR20291_0805).

The protein localises to the cell membrane. In terms of biological role, probably part of an ABC transporter complex involved in tyrosine uptake. May also import phenylalanine. This is Tyrosine-binding protein from Clostridioides difficile (strain R20291) (Peptoclostridium difficile).